The primary structure comprises 293 residues: 4-hydroxy-tetrahydrodipicolinate synthase (293 aa).

Residue T44 participates in pyruvate binding. Y132 functions as the Proton donor/acceptor in the catalytic mechanism. K162 acts as the Schiff-base intermediate with substrate in catalysis. Residue I204 participates in pyruvate binding.

Belongs to the DapA family. As to quaternary structure, homotetramer; dimer of dimers.

It is found in the cytoplasm. The enzyme catalyses L-aspartate 4-semialdehyde + pyruvate = (2S,4S)-4-hydroxy-2,3,4,5-tetrahydrodipicolinate + H2O + H(+). It functions in the pathway amino-acid biosynthesis; L-lysine biosynthesis via DAP pathway; (S)-tetrahydrodipicolinate from L-aspartate: step 3/4. Functionally, catalyzes the condensation of (S)-aspartate-beta-semialdehyde [(S)-ASA] and pyruvate to 4-hydroxy-tetrahydrodipicolinate (HTPA). The sequence is that of 4-hydroxy-tetrahydrodipicolinate synthase from Erythrobacter litoralis (strain HTCC2594).